Here is a 471-residue protein sequence, read N- to C-terminus: Abscission/NoCut checkpoint regulator (471 aa).

The interval 39 to 64 (GGAGQGREGRSWGEGPRGPGLGRRDL) is disordered. Residues 74–133 (ATMESRCYGCAVKFTLFKKEYGCKNCGRAFCSGCLSFSAAVPRTGNTQQKVCKQCHEVLT) form an FYVE-type zinc finger. Cys80, Cys83, Cys96, Cys99, Cys104, Cys107, Cys125, and Cys128 together coordinate Zn(2+). Ser144 carries the post-translational modification Phosphoserine. The short motif at 174–187 (DQMIAERLARLRQE) is the MIM1-A element. Lys207 participates in a covalent cross-link: Glycyl lysine isopeptide (Lys-Gly) (interchain with G-Cter in SUMO2). Thr243 is modified (phosphothreonine). The segment at 271 to 299 (KGGGPAASLQNDLNQGGPGSTNSKRQANW) is disordered. Residues 278–299 (SLQNDLNQGGPGSTNSKRQANW) are compositionally biased toward polar residues. 2 positions are modified to phosphoserine: Gly286 and Ser293. A coiled-coil region spans residues 311-375 (EAALELREEN…RVLQQLTEEA (65 aa)). Residues 326 to 339 (ILALAKRLAMLRGQ) carry the MIM1-B motif. Ser354 carries the post-translational modification Phosphoserine. The segment at 386–412 (PAEQASRPWTQPRGAEPEAQDVDPRPE) is disordered. Position 463 is a phosphoserine (Ser463).

Interacts (via MIM1-B) with VPS4A; interaction takes place at the midbody ring following cytokinesis checkpoint activation. In terms of processing, phosphorylated in vitro at Ser-22 by AURKB; however, phosphorylation at this site could not be confirmed in vivo. As to expression, detected in brain, heart, skeletal muscle and kidney. Expressed in the liver (at protein level).

It localises to the cytoplasm. The protein resides in the cytoskeleton. Its subcellular location is the microtubule organizing center. It is found in the centrosome. The protein localises to the cleavage furrow. It localises to the midbody. The protein resides in the midbody ring. Its function is as follows. Key regulator of abscission step in cytokinesis: part of the cytokinesis checkpoint, a process required to delay abscission to prevent both premature resolution of intercellular chromosome bridges and accumulation of DNA damage. Together with CHMP4C, required to retain abscission-competent VPS4 (VPS4A and/or VPS4B) at the midbody ring until abscission checkpoint signaling is terminated at late cytokinesis. Deactivation of AURKB results in dephosphorylation of CHMP4C followed by its dissociation from ZFYVE19/ANCHR and VPS4 and subsequent abscission. This Homo sapiens (Human) protein is Abscission/NoCut checkpoint regulator (ZFYVE19).